A 761-amino-acid chain; its full sequence is Mitochondrial inner membrane m-AAA protease component YTA10 (761 aa).

Over 1-115 the chain is Mitochondrial matrix; sequence MMMWQRYARG…SLSEYFRSKE (115 aa). The tract at residues 67-101 is disordered; it reads SWTRLNENRPNKEGEGKNNGNKDNNSNKEDGKDKR. Composition is skewed to basic and acidic residues over residues 72 to 82 and 91 to 101; these read NENRPNKEGEG and NSNKEDGKDKR. A helical membrane pass occupies residues 116–136; it reads FANTMFLTIGFTIIFTLLTPS. The Mitochondrial intermembrane portion of the chain corresponds to 137 to 223; it reads SNNSGDDSNR…IPIKYIERSS (87 aa). Residues 224-244 traverse the membrane as a helical segment; that stretch reads PFTFLFPFLPTIILLGGLYFI. Residues 245–761 lie on the Mitochondrial matrix side of the membrane; it reads TRKINSSPPN…EPPEAPAATN (517 aa). ATP-binding residues include V290, A291, T332, G333, K334, T335, L336, and H472. A Zn(2+)-binding site is contributed by H558. E559 is an active-site residue. H562 and D634 together coordinate Zn(2+).

This sequence in the N-terminal section; belongs to the AAA ATPase family. It in the C-terminal section; belongs to the peptidase M41 family. In terms of assembly, component of the 850 kDa m-AAA protease complex, a heterohexamer composed of YTA12/RCA1 and YTA10/AFG3. Associates with the prohibitin complex, composed of PHB1 and PHB2, inhibiting the activity of the m-AAA protease complex. Requires Zn(2+) as cofactor.

The protein localises to the mitochondrion inner membrane. The catalysed reaction is ATP + H2O = ADP + phosphate + H(+). With respect to regulation, ATP hydrolysis is coordinated within m-AAA protease ring complexes: ATP-binding to YTA10/AFG3 inhibits ATP hydrolysis by the neighboring subunit YTA12/RCA1, leading to coordinated ATP hydrolysis within the AAA ATPase ring. Its function is as follows. Catalytic component of the m-AAA protease, a protease that plays a key role in proteostasis of inner mitochondrial membrane proteins. YTA10/AFG3 possesses both ATPase and protease activities: the ATPase activity is required to unfold substrates, threading them into the internal proteolytic cavity for hydrolysis into small peptide fragments. The complex is necessary for the assembly of mitochondrial respiratory chain and ATPase complexes. The m-AAA protease carries out protein quality control in the inner membrane of the mitochondria by mediating degradation of mistranslated or misfolded polypeptides. It also mediates protein maturation of the mitochondrial ribosomal subunit MRPL32/bL32m by catalyzing the cleavage of the presequence of MRPL32/bL32m prior to assembly into the mitochondrial ribosome. Promotes maturation of cytochrome c peroxidase (CCP1) by acting as a membrane protein dislocase via its ATPase activity: pulls the CCP1 transmembrane to the matrix prior to processing by the rhomboid protease PCP1. The membrane protein dislocase activity is also required to dislocate moderately hydrophobic transmembrane segments from the membrane. The protein is Mitochondrial inner membrane m-AAA protease component YTA10 of Saccharomyces cerevisiae (strain ATCC 204508 / S288c) (Baker's yeast).